Here is a 429-residue protein sequence, read N- to C-terminus: Putative GMP synthase [glutamine-hydrolyzing] (429 aa).

The Glutamine amidotransferase type-1 domain occupies 10 to 118; sequence TIFILDFGSQ…GYTPIHLYPC (109 aa). Cysteine 87 acts as the Nucleophile in catalysis. A GMPS ATP-PPase domain is found at 119-304; sequence ELFKHIVDCE…LGLSSYLLDR (186 aa). Residues histidine 176 and glutamate 178 contribute to the active site.

As to quaternary structure, homodimer.

The catalysed reaction is XMP + L-glutamine + ATP + H2O = GMP + L-glutamate + AMP + diphosphate + 2 H(+). The protein operates within purine metabolism; GMP biosynthesis; GMP from XMP (L-Gln route): step 1/1. Catalyzes the synthesis of GMP from XMP. The sequence is that of Putative GMP synthase [glutamine-hydrolyzing] (guaA) from Chlamydia pneumoniae (Chlamydophila pneumoniae).